The primary structure comprises 56 residues: PI-stichotoxin-Hmg3b (56 aa).

The region spanning 4-54 (CLEPKVVGPCKAGIRRFYFDSETGKCTLFLYGGCKGNGNNFETLHACRAIC) is the BPTI/Kunitz inhibitor domain. Intrachain disulfides connect cysteine 4–cysteine 54, cysteine 13–cysteine 37, and cysteine 29–cysteine 50.

Belongs to the venom Kunitz-type family. Sea anemone type 2 potassium channel toxin subfamily. Contains three disulfide bonds.

It is found in the secreted. The protein resides in the nematocyst. Its function is as follows. Serine protease inhibitor. This Heteractis magnifica (Magnificent sea anemone) protein is PI-stichotoxin-Hmg3b.